The following is a 202-amino-acid chain: Lipoprotein signal peptidase (202 aa).

The disordered stretch occupies residues 1–29 (MPDEPTGSADPLTSTEEAGGAGEPNAPAP). Helical transmembrane passes span 35-55 (MLLS…VVAV), 88-108 (GYTW…FWMG), and 112-132 (VSPW…GNLV). Catalysis depends on residues aspartate 148 and aspartate 162. Residues 160 to 180 (VADPSVVGGAILLVILSIFGF) form a helical membrane-spanning segment.

It belongs to the peptidase A8 family.

It localises to the cell membrane. The catalysed reaction is Release of signal peptides from bacterial membrane prolipoproteins. Hydrolyzes -Xaa-Yaa-Zaa-|-(S,diacylglyceryl)Cys-, in which Xaa is hydrophobic (preferably Leu), and Yaa (Ala or Ser) and Zaa (Gly or Ala) have small, neutral side chains.. It functions in the pathway protein modification; lipoprotein biosynthesis (signal peptide cleavage). Functionally, this protein specifically catalyzes the removal of signal peptides from prolipoproteins. In Mycobacterium bovis (strain ATCC BAA-935 / AF2122/97), this protein is Lipoprotein signal peptidase.